The following is a 628-amino-acid chain: Probable potassium transport system protein Kup (628 aa).

The next 12 helical transmembrane spans lie at 15–35 (FAAEIGALGVVFGDIGTSPLY), 49–69 (FLGGDVLGLLSLITWSIILSV), 106–126 (WYLLAAGLLGAAMLIGDGVLT), 141–161 (ISPELEHWVVTLTVLVLLAVF), 174–194 (FFGPIMLMWFGSLGALGVYGI), 210–230 (IMLMVNHPGLAGVILGACFLA), 254–274 (LFVAMPALLLNYFGQGAILLV), 295–315 (LLFLATAATVIASQSIITGVF), 343–363 (IYVGRLNWLLMIACIAVVLGF), 369–389 (LASAYGIAVAFAMVTTSILFI), 398–418 (WPAPAVWAMATGLLTIDFAFA), and 425–445 (IHDGGWLPLSIAAAIIFVMVS).

Belongs to the HAK/KUP transporter (TC 2.A.72) family.

The protein localises to the cell inner membrane. It carries out the reaction K(+)(in) + H(+)(in) = K(+)(out) + H(+)(out). In terms of biological role, transport of potassium into the cell. Likely operates as a K(+):H(+) symporter. This is Probable potassium transport system protein Kup from Xanthobacter autotrophicus (strain ATCC BAA-1158 / Py2).